The primary structure comprises 351 residues: C(7)-cyclitol 7-kinase (351 aa).

It belongs to the ROK (NagC/XylR) family.

It catalyses the reaction valienone + ATP = valienone 7-phosphate + ADP + H(+). It carries out the reaction validone + ATP = validone 7-phosphate + ADP + H(+). Functionally, involved in the biosynthesis of the antifungal agent validamycin A. Catalyzes the phosphorylation of valienone and validone to their 7-phosphate derivatives. This Streptomyces hygroscopicus subsp. limoneus protein is C(7)-cyclitol 7-kinase.